Reading from the N-terminus, the 222-residue chain is Flagellin B5 (222 aa).

Positions methionine 1 to glycine 4 are excised as a propeptide.

The protein belongs to the archaeal flagellin family.

It localises to the archaeal flagellum. In terms of biological role, flagellin is the subunit protein which polymerizes to form the filaments of archaeal flagella. The sequence is that of Flagellin B5 (flaB5) from Pyrococcus abyssi (strain GE5 / Orsay).